The following is a 370-amino-acid chain: Anhydro-N-acetylmuramic acid kinase (370 aa).

12–19 (GTSLDGVD) contacts ATP.

The protein belongs to the anhydro-N-acetylmuramic acid kinase family.

The catalysed reaction is 1,6-anhydro-N-acetyl-beta-muramate + ATP + H2O = N-acetyl-D-muramate 6-phosphate + ADP + H(+). It functions in the pathway amino-sugar metabolism; 1,6-anhydro-N-acetylmuramate degradation. The protein operates within cell wall biogenesis; peptidoglycan recycling. In terms of biological role, catalyzes the specific phosphorylation of 1,6-anhydro-N-acetylmuramic acid (anhMurNAc) with the simultaneous cleavage of the 1,6-anhydro ring, generating MurNAc-6-P. Is required for the utilization of anhMurNAc either imported from the medium or derived from its own cell wall murein, and thus plays a role in cell wall recycling. This is Anhydro-N-acetylmuramic acid kinase from Pectobacterium atrosepticum (strain SCRI 1043 / ATCC BAA-672) (Erwinia carotovora subsp. atroseptica).